Reading from the N-terminus, the 985-residue chain is MIGSPDLVAFTKETDFSEITTDSSVLPEDLSVPMYPYTGDATPWSKISSAKLKKDFILISEFSEQVGPQPLLTVPLETKACGTFDLNYFSLRIMSVDYQTSLAGSPGYGSFKLNFVEDSKVVLADSREGVFAYVHHLTLYDLEARGFVRPLCLAYVSSDENKIIQQFQRISTEFNKVSECLKTGNRKNFANELEVKLRDLEYTRVVLQKELNTVSVKCSSEREPILNGVHSFERNADEVKLNEKSSHTDEISPQEKDGCGNSRKVEVKLENENRSHFEHEQYGKQRKDKPDKTSCPMPLANKNDELASVEKLIQDYKSLLKQVTCYPTRKLRDSEYSPYEPDDLPQSFDLDLDSQFAGPMLECSVFTYTNTPSQTLQQINSTSSSRFDKRLKTLEELCDDYFYQQALQQLYSIERTFRGDACYLYTQQLCRNLLRNLKSTNFLFEDPCDLDDDVGLQIGQSTIQQPSFLPAPSFLSGPVSLESYASCVEMVPIKLELGGSSQSQVQHSTLNTPSKDNRPQVADKSPAEVEMKGEIISAPDCQGNVESVSNLMKTSISSGDSIEVLGTERSFRSQGANTLVETAMHRPPPLSSATALEGLKQGRVPTRRTCSEDSIEVLCITESISPDELRASYPCAIDEESPEQETDEKNSSQYQEDNNEKSIYVQGKISADHENACLKKLHPSVTVTPPDCPLTLEETSFQDSCQATESATMLLLDEPSRMVPDDLSDCFSYRSTTASTTSECTFPACLPKDKREGGTRRRRGRVGRAALQFMRQFPFAVHAVFSLLSGRTLVVLGSEEAAVRRLVTALSVYLPHLTKYKDSIQPWTSTPLQLTDLLNWKLIGFDRMCSFNPSSLPHCLDHYSRYLSILDVDQKTLHCPTYSGSLINLLVEPKSHFKRGNTYFTFAQSVQSKLVTKAFLLTFSHGHPSPSRPQGSSGTECFLSELHTDDKKILRYLSELIKLHFMEVTPNVLLFSYTTTSIFKL.

The uDENN FLCN/SMCR8-type domain occupies 47–225; the sequence is ISSAKLKKDF…VKCSSEREPI (179 aa). Residues 242–292 show a composition bias toward basic and acidic residues; that stretch reads NEKSSHTDEISPQEKDGCGNSRKVEVKLENENRSHFEHEQYGKQRKDKPDK. Disordered stretches follow at residues 242-301, 502-528, and 639-659; these read NEKS…PLAN, QSQV…SPAE, and EESP…EDNN. The 506-residue stretch at 390-895 folds into the cDENN FLCN/SMCR8-type domain; it reads RLKTLEELCD…LINLLVEPKS (506 aa). Polar residues predominate over residues 502–514; the sequence is QSQVQHSTLNTPS. Positions 904-962 constitute a dDENN FLCN/SMCR8-type domain; that stretch reads FTFAQSVQSKLVTKAFLLTFSHGHPSPSRPQGSSGTECFLSELHTDDKKILRYLSELIK.

It belongs to the SMCR8 family. Component of the C9orf72-SMCR8 complex. The C9orf72-SMCR8 complex associates with the ATG1/ULK1 kinase complex.

The protein localises to the cytoplasm. The protein resides in the nucleus. Functionally, component of the C9orf72-SMCR8 complex, a complex that has guanine nucleotide exchange factor (GEF) activity and regulates autophagy. In the complex, C9orf72 and SMCR8 probably constitute the catalytic subunits that promote the exchange of GDP to GTP, converting inactive GDP-bound RAB8A and RAB39B into their active GTP-bound form, thereby promoting autophagosome maturation. The C9orf72-SMCR8 complex also acts as a negative regulator of autophagy initiation by interacting with the ATG1/ULK1 kinase complex and inhibiting its protein kinase activity. This is Guanine nucleotide exchange protein smcr8b (smcr8b) from Danio rerio (Zebrafish).